Consider the following 305-residue polypeptide: Type II restriction enzyme SsoII (305 aa).

The enzyme catalyses Endonucleolytic cleavage of DNA to give specific double-stranded fragments with terminal 5'-phosphates.. In terms of biological role, a P subtype restriction enzyme that recognizes the double-stranded sequence 5'-CCNGG-3' and cleaves before C-1. This Shigella sonnei protein is Type II restriction enzyme SsoII (ssoIIR).